The sequence spans 333 residues: T-cell surface glycoprotein CD1b-1 (333 aa).

An N-terminal signal peptide occupies residues 1–18 (MLLLPLLLLAVIVPGGDN). Over 19-302 (EDVFQGPTSF…LYWGHPTSTG (284 aa)) the chain is Extracellular. N-linked (GlcNAc...) asparagine glycans are attached at residues N38, N75, N146, and N258. Cystine bridges form between C120–C184 and C224–C279. Residues 185–295 (PRYFLSVLDA…LGDQDIVLYW (111 aa)) enclose the Ig-like domain. The helical transmembrane segment at 303 to 323 (LIFVAIIVSSLILLICLALWF) threads the bilayer. The Cytoplasmic segment spans residues 324 to 333 (WRRWSYLTIL). The Internalization signal motif lies at 329–332 (YLTI).

As to quaternary structure, heterodimer with B2M (beta-2-microglobulin). Interacts with saposin C.

The protein localises to the cell membrane. Its subcellular location is the endosome membrane. The protein resides in the lysosome membrane. In terms of biological role, antigen-presenting protein that binds self and non-self lipid and glycolipid antigens and presents them to T-cell receptors on natural killer T-cells. This Ovis aries (Sheep) protein is T-cell surface glycoprotein CD1b-1.